A 575-amino-acid chain; its full sequence is Amino-acid acetyltransferase, mitochondrial (575 aa).

Residues Met1–Ser35 constitute a mitochondrion transit peptide. Residues Phe398 to His557 form the N-acetyltransferase domain.

It belongs to the acetyltransferase family.

It localises to the mitochondrion. It catalyses the reaction L-glutamate + acetyl-CoA = N-acetyl-L-glutamate + CoA + H(+). It functions in the pathway amino-acid biosynthesis; L-arginine biosynthesis; N(2)-acetyl-L-ornithine from L-glutamate: step 1/4. In terms of biological role, N-acetylglutamate synthase involved in arginine biosynthesis. The chain is Amino-acid acetyltransferase, mitochondrial (ARG2) from Debaryomyces hansenii (strain ATCC 36239 / CBS 767 / BCRC 21394 / JCM 1990 / NBRC 0083 / IGC 2968) (Yeast).